Reading from the N-terminus, the 202-residue chain is Small ribosomal subunit protein uS4 (202 aa).

The segment at leucine 18–glutamate 44 is disordered. The 63-residue stretch at methionine 90–asparagine 152 folds into the S4 RNA-binding domain.

The protein belongs to the universal ribosomal protein uS4 family. Part of the 30S ribosomal subunit. Contacts protein S5. The interaction surface between S4 and S5 is involved in control of translational fidelity.

Functionally, one of the primary rRNA binding proteins, it binds directly to 16S rRNA where it nucleates assembly of the body of the 30S subunit. In terms of biological role, with S5 and S12 plays an important role in translational accuracy. This Picosynechococcus sp. (strain ATCC 27264 / PCC 7002 / PR-6) (Agmenellum quadruplicatum) protein is Small ribosomal subunit protein uS4.